A 1217-amino-acid chain; its full sequence is Genetic suppressor element 1 (1217 aa).

The interval 1–155 (MKGMSHEPKS…SRSSSGGRER (155 aa)) is disordered. Residue Ser-10 is modified to Phosphoserine. Residues 15–33 (MLSTATRTTATVNPLTPSP) show a composition bias toward polar residues. Low complexity-rich tracts occupy residues 43–63 (SPATSSALSAQAAPSSSFAAA) and 76–89 (GSSLSSESSPVSSP). Residues Ser-84 and Ser-95 each carry the phosphoserine modification. Low complexity predominate over residues 103–114 (VPMGPIIVPPGG). Position 305 is an asymmetric dimethylarginine (Arg-305). A coiled-coil region spans residues 321–403 (ERMSGLSAER…REKELLAAKA (83 aa)). Disordered stretches follow at residues 324–385 (SGLS…EREL) and 418–465 (RGHA…HHTV). Basic and acidic residues predominate over residues 331 to 385 (LQMDEELRREREREREREREREADREREKEREREREKEREQEKEREREKEREREL). Residue Thr-433 is modified to Phosphothreonine. Positions 450 to 465 (PVQHPLHPVPTPHHTV) are enriched in low complexity. Residue Lys-496 is modified to N6-acetyllysine. Disordered regions lie at residues 526–579 (HLDM…QLHA), 633–675 (KAEE…GPFL), and 699–720 (FGELSGPLKPGSPYRPPVPRAP). Basic and acidic residues-rich tracts occupy residues 551–561 (NRHEPGGRDPP) and 633–645 (KAEEGPRKREPAP). Residues 711–720 (PYRPPVPRAP) show a composition bias toward pro residues. An N6-acetyllysine modification is found at Lys-739. Ser-766 is subject to Phosphoserine. 4 disordered regions span residues 807 to 858 (KEEL…NNSP), 903 to 930 (ADSLTNSPRDSPAVSLSEPATQQASLDV), 948 to 981 (EPGKLEQVRPQELSRVQELAPASGEKARLSEAPG), and 1068 to 1122 (LQSS…PKRK). A compositionally biased stretch (basic residues) spans 813 to 822 (QKRRKRRRML). Residues Ser-826 and Ser-828 each carry the phosphoserine modification. Composition is skewed to polar residues over residues 831–840 (TIQSKRQTPS) and 847–858 (TRYSPDEMNNSP). The residue at position 857 (Ser-857) is a Phosphoserine. Thr-907 is subject to Phosphothreonine. Position 909 is a phosphoserine (Ser-909). Polar residues predominate over residues 1068-1085 (LQSSSRAPPPQHNGQQEP). A compositionally biased stretch (acidic residues) spans 1099 to 1117 (RDSEEEEEEDDEDGEDEEE). Ser-1101 carries the post-translational modification Phosphoserine. Residues 1127–1201 (EAVFEAYQEH…ELDHLRKCLA (75 aa)) adopt a coiled-coil conformation.

May be a component of a BHC histone deacetylase complex that contains HDAC1, HDAC2, HMG20B/BRAF35, KDM1A, RCOR1/CoREST, PHF21A/BHC80, ZMYM2, ZNF217, ZMYM3, GSE1 and GTF2I.

The sequence is that of Genetic suppressor element 1 (GSE1) from Homo sapiens (Human).